An 87-amino-acid polypeptide reads, in one-letter code: uncharacterized protein (87 aa).

This is an uncharacterized protein from Methanocaldococcus jannaschii (strain ATCC 43067 / DSM 2661 / JAL-1 / JCM 10045 / NBRC 100440) (Methanococcus jannaschii).